The chain runs to 135 residues: Small ribosomal subunit protein eS6 (135 aa).

Belongs to the eukaryotic ribosomal protein eS6 family.

The chain is Small ribosomal subunit protein eS6 from Methanospirillum hungatei JF-1 (strain ATCC 27890 / DSM 864 / NBRC 100397 / JF-1).